A 419-amino-acid polypeptide reads, in one-letter code: L-rhamnose isomerase (419 aa).

3 residues coordinate Mn(2+): H262, D294, and D296.

It belongs to the rhamnose isomerase family. As to quaternary structure, homotetramer. Mn(2+) serves as cofactor.

The protein localises to the cytoplasm. It carries out the reaction L-rhamnopyranose = L-rhamnulose. It participates in carbohydrate degradation; L-rhamnose degradation; glycerone phosphate from L-rhamnose: step 1/3. Catalyzes the interconversion of L-rhamnose and L-rhamnulose. In Escherichia coli (strain SMS-3-5 / SECEC), this protein is L-rhamnose isomerase.